The primary structure comprises 946 residues: MKPLSSPLQQYWQTVVERLPEPLADESLSAQAKSVLTFSDFVQDSVIAHPEWLTELESQPPQADEWQHYSAWWQEALSNVSDEAGLMRELRLFRRRIMVRIAWAQTLALVTEESILLQLSHLAETLIVAARDWLYDACCREWGTPCNAQGEAQPLLILGMGKLGGGELNFSSDIDLIFAWPEHGCTQGGRRELDNAQFFTRMGQRLIKVLDQPTQDGFVYRVDMRLRPFGESGPLVLSFAALEDYYQEQGRDWERYAMVKARIMGDSEGVYANELRAMLRPFVFRRYIDFSVIQSLRNMKGMIAREVRRRGLTDNIKLGAGGIREIEFIVQVFQLIRGGREPSLQSRSLLPTLSAIAELHLLSENDAEQLRVAYLFLRRLENLLQSINDEQTQTLPSDELNRARLAWAMDFADWQQLTGALIGHMTNVRRVFNELIGDDESETQEESLSEQWRELWQDALQEDDTTPVLAHLSEDDRKQVLTLIADFRKELDKRTIGPRGRQVLDHLMPHLLRDVCTREDAAVTLSRITALLVGIVTRTTYLELLSEFPAALKHLISLCAASPMIASQLARYPLLLDELLDPNTLYQPTATDAYRDELRQYLLRVPEDDEEQQLEALRQFKQAQLLRIAAADIAGTLPVMKVSDHLTWLAEAMIDAVVQQAWVQMVARYGKPNHLNEREGRGFAVVGYGKLGGWELGYSSDLDLIFLHDCPMDAMTDGEREIDGRQFYLRLAQRIMHLFSTRTSSGILYEVDARLRPSGAAGMLVTSAEAFADYQKNEAWTWEHQALVRARVVYGDPQLTAHFDAVRREIMTLPREGKTLQTEVREMREKMRAHLGNKHRDRFDIKADEGGITDIEFITQYLVLRYAHEKPKLTRWSDNVRILELLAQNDIMEEQEAMALTRAYTTLRDELHHLALQELPGHVPEDCFTAEREQVRVSWQKWLVEE.

The adenylyl removase stretch occupies residues 1-440 (MKPLSSPLQQ…VFNELIGDDE (440 aa)). An adenylyl transferase region spans residues 449–946 (SEQWRELWQD…VSWQKWLVEE (498 aa)).

This sequence belongs to the GlnE family. It depends on Mg(2+) as a cofactor.

It carries out the reaction [glutamine synthetase]-O(4)-(5'-adenylyl)-L-tyrosine + phosphate = [glutamine synthetase]-L-tyrosine + ADP. It catalyses the reaction [glutamine synthetase]-L-tyrosine + ATP = [glutamine synthetase]-O(4)-(5'-adenylyl)-L-tyrosine + diphosphate. In terms of biological role, involved in the regulation of glutamine synthetase GlnA, a key enzyme in the process to assimilate ammonia. When cellular nitrogen levels are high, the C-terminal adenylyl transferase (AT) inactivates GlnA by covalent transfer of an adenylyl group from ATP to specific tyrosine residue of GlnA, thus reducing its activity. Conversely, when nitrogen levels are low, the N-terminal adenylyl removase (AR) activates GlnA by removing the adenylyl group by phosphorolysis, increasing its activity. The regulatory region of GlnE binds the signal transduction protein PII (GlnB) which indicates the nitrogen status of the cell. The chain is Bifunctional glutamine synthetase adenylyltransferase/adenylyl-removing enzyme from Escherichia coli (strain SMS-3-5 / SECEC).